We begin with the raw amino-acid sequence, 232 residues long: V-type ATP synthase subunit E (232 aa).

The protein belongs to the V-ATPase E subunit family.

Its function is as follows. Produces ATP from ADP in the presence of a proton gradient across the membrane. The sequence is that of V-type ATP synthase subunit E (atpE) from Treponema pallidum (strain Nichols).